We begin with the raw amino-acid sequence, 245 residues long: 6-carboxyhexanoate--CoA ligase (245 aa).

Belongs to the BioW family. Homodimer. Requires Mg(2+) as cofactor.

It carries out the reaction heptanedioate + ATP + CoA = 6-carboxyhexanoyl-CoA + AMP + diphosphate. Its pathway is metabolic intermediate metabolism; pimeloyl-CoA biosynthesis; pimeloyl-CoA from pimelate: step 1/1. Catalyzes the transformation of pimelate into pimeloyl-CoA with concomitant hydrolysis of ATP to AMP. The polypeptide is 6-carboxyhexanoate--CoA ligase (Sulfurihydrogenibium azorense (strain DSM 15241 / OCM 825 / Az-Fu1)).